Consider the following 417-residue polypeptide: Phosphoglycerate kinase 1 (417 aa).

Ser-2 carries the post-translational modification N-acetylserine. Phosphoserine occurs at positions 2 and 4. Residue Lys-6 is modified to N6-succinyllysine. Lys-11 is subject to N6-acetyllysine. (2R)-3-phosphoglycerate-binding residues include Val-23, Asp-24, Phe-25, Asn-26, Gln-38, and Arg-39. The mitochondrial targeting region exposed following cis-trans isomerization by PIN1 and recognized by the TOM complex for mitochondrial translocation of the protein stretch occupies residues 38–43 (QRIKAA). Lys-48 carries the N6-acetyllysine; alternate modification. An N6-succinyllysine; alternate modification is found at Lys-48. Positions 62, 63, 65, and 66 each coordinate (2R)-3-phosphoglycerate. Lys-75 is modified (N6-acetyllysine). Phosphotyrosine is present on Tyr-76. Lys-86 and Lys-91 each carry N6-acetyllysine. Residue Lys-97 is modified to N6-acetyllysine; alternate. Lys-97 bears the N6-(2-hydroxyisobutyryl)lysine; alternate mark. (2R)-3-phosphoglycerate contacts are provided by Leu-122 and Arg-123. N6-acetyllysine; alternate is present on Lys-131. An N6-malonyllysine; alternate modification is found at Lys-131. Position 146 is an N6-acetyllysine (Lys-146). Residues His-170 and Arg-171 each contribute to the (2R)-3-phosphoglycerate site. An N6-succinyllysine modification is found at Lys-191. Tyr-196 carries the phosphotyrosine modification. The residue at position 199 (Lys-199) is an N6-acetyllysine. Phosphoserine is present on Ser-203. Gly-214 is an ADP binding site. Position 214 (Gly-214) interacts with CDP. Residues Ala-215 and Lys-216 each contribute to the AMP site. Ala-215 contacts ATP. Ala-215 is a Mg(2+) binding site. Position 216 is an N6-(2-hydroxyisobutyryl)lysine (Lys-216). Residues Ala-218 and Asp-219 each coordinate Mg(2+). Position 219 (Asp-219) interacts with CDP. AMP is bound at residue Lys-220. Lys-220 serves as a coordination point for ATP. At Lys-220 the chain carries N6-(2-hydroxyisobutyryl)lysine. Gly-238 contacts ADP. Gly-238 serves as a coordination point for CDP. Gly-239 serves as a coordination point for AMP. Gly-239 provides a ligand contact to ATP. N6-acetyllysine occurs at positions 267 and 291. Position 313 (Gly-313) interacts with AMP. Gly-313 contacts ATP. Lys-323 carries the post-translational modification N6-(2-hydroxyisobutyryl)lysine. Residues Gly-338, Val-340, and Phe-343 each contribute to the CDP site. Phe-343 is a binding site for ADP. Glu-344 is an AMP binding site. Glu-344 serves as a coordination point for ATP. Ser-354 carries the phosphoserine modification. The residue at position 361 (Lys-361) is an N6-acetyllysine. Residues Asp-375 and Thr-376 each coordinate ATP. Residue Asp-375 coordinates Mg(2+).

Belongs to the phosphoglycerate kinase family. In terms of assembly, monomer. Interacts with kinase MAPK1/ERK2; the interaction is direct, occurs under hypoxic conditions, and promotes its interaction with PIN1. Interacts with peptidyl-prolyl cis-trans isomerase PIN1; the interaction is direct, occurs under hypoxic conditions, and targets the protein to the mitochondrion by promoting interactions with the TOM complex. Interacts with mitochondrial circRNA mcPGK1 (via its 2nd stem-loop); the interaction is direct and targets the protein to the mitochondrion by promoting interactions with the TOM complex. Interacts with pyruvate dehydrogenase kinase PDK1; the interaction is direct, occurs under hypoxic conditions and leads to PDK1-mediated inhibition of pyruvate dehydrogenase complex activity. It depends on Mg(2+) as a cofactor. In terms of processing, phosphorylated at Ser-203 by MAPK1/ERK2 under hypoxic conditions, which promotes its mitochondrial targeting.

It is found in the cytoplasm. The protein localises to the cytosol. Its subcellular location is the mitochondrion matrix. It carries out the reaction (2R)-3-phosphoglycerate + ATP = (2R)-3-phospho-glyceroyl phosphate + ADP. The catalysed reaction is L-seryl-[protein] + ATP = O-phospho-L-seryl-[protein] + ADP + H(+). It participates in carbohydrate degradation; glycolysis; pyruvate from D-glyceraldehyde 3-phosphate: step 2/5. Its function is as follows. Catalyzes one of the two ATP producing reactions in the glycolytic pathway via the reversible conversion of 1,3-diphosphoglycerate to 3-phosphoglycerate. Both L- and D- forms of purine and pyrimidine nucleotides can be used as substrates, but the activity is much lower on pyrimidines. In addition to its role as a glycolytic enzyme, it seems that PGK-1 acts as a polymerase alpha cofactor protein (primer recognition protein). Acts as a protein kinase when localized to the mitochondrion where it phosphorylates pyruvate dehydrogenase kinase PDK1 to inhibit pyruvate dehydrogenase complex activity and suppress the formation of acetyl-coenzyme A from pyruvate, and consequently inhibit oxidative phosphorylation and promote glycolysis. May play a role in sperm motility. This chain is Phosphoglycerate kinase 1 (Pgk1), found in Rattus norvegicus (Rat).